The following is a 1143-amino-acid chain: DNA polymerase III subunit alpha (1143 aa).

This sequence belongs to the DNA polymerase type-C family. DnaE subfamily. As to quaternary structure, DNA polymerase III contains a core (composed of alpha, epsilon and theta chains) that associates with a tau subunit. This core dimerizes to form the PolIII' complex. PolIII' associates with the gamma complex (composed of gamma, delta, delta', psi and chi chains) and with the beta chain to form the complete DNA polymerase III complex.

The protein resides in the cytoplasm. It carries out the reaction DNA(n) + a 2'-deoxyribonucleoside 5'-triphosphate = DNA(n+1) + diphosphate. In terms of biological role, DNA polymerase III is a complex, multichain enzyme responsible for most of the replicative synthesis in bacteria. This DNA polymerase also exhibits 3' to 5' exonuclease activity. The alpha chain is the DNA polymerase. The protein is DNA polymerase III subunit alpha (dnaE1) of Caulobacter vibrioides (strain NA1000 / CB15N) (Caulobacter crescentus).